The sequence spans 1051 residues: Ubiquitin carboxyl-terminal hydrolase 28 (1051 aa).

Positions 60-82 are disordered; sequence DQRVKEPSHDTTAAEPSEVEESA. At Ser-67 the chain carries Phosphoserine. The UIM domain maps to 97–116; sequence DNKDDLQAAIALSLLESPNI. Residue Lys-99 forms a Glycyl lysine isopeptide (Lys-Gly) (interchain with G-Cter in SUMO2) linkage. Over residues 121–135 the composition is skewed to basic and acidic residues; it reads RDLNRAHEANSAETK. Residues 121–140 are disordered; the sequence is RDLNRAHEANSAETKRSKRK. In terms of domain architecture, USP spans 162-655; sequence VGLKNVGNTC…SAYCLMYIND (494 aa). Cys-171 (nucleophile) is an active-site residue. Ser-376 is modified (phosphoserine). Residues 483–538 are disordered; the sequence is DLTPKESSSPESCSQNAGSTFSSPEDALPSSEGMNGPFTSPHSSLETPAPPAPRTV. Polar residues-rich tracts occupy residues 487-505 and 519-528; these read KESS…TFSS and PFTSPHSSLE. Ser-555 carries the post-translational modification Phosphoserine. His-605 acts as the Proton acceptor in catalysis. Residues 703 to 735 are disordered; sequence EEQSCKIPQMESSPNSSSQDFSTSQESPAVSSH. A compositionally biased stretch (low complexity) spans 713 to 730; sequence ESSPNSSSQDFSTSQESP. Residue Ser-720 is modified to Phosphoserine. Thr-1022 carries the post-translational modification Phosphothreonine.

It belongs to the peptidase C19 family. USP28 subfamily. As to quaternary structure, interacts with ZNF304. Interacts with PRKD1. Interacts with TP53BP1. Interacts with FBXW7; following DNA damage, dissociates from FBXW7 leading to degradation of MYC. In terms of processing, degraded upon nickel ion level or hypoxia exposure. Post-translationally, phosphorylated upon DNA damage at Ser-67 and Ser-720, by ATM or ATR. Phosphorylated by PRKD1.

The protein localises to the nucleus. The protein resides in the nucleoplasm. It carries out the reaction Thiol-dependent hydrolysis of ester, thioester, amide, peptide and isopeptide bonds formed by the C-terminal Gly of ubiquitin (a 76-residue protein attached to proteins as an intracellular targeting signal).. Deubiquitinase involved in DNA damage response checkpoint and MYC proto-oncogene stability. Involved in DNA damage induced apoptosis by specifically deubiquitinating proteins of the DNA damage pathway such as CLSPN. Also involved in G2 DNA damage checkpoint, by deubiquitinating CLSPN, and preventing its degradation by the anaphase promoting complex/cyclosome (APC/C). In contrast, it does not deubiquitinate PLK1. Specifically deubiquitinates MYC in the nucleoplasm, leading to prevent MYC degradation by the proteasome: acts by specifically interacting with FBXW7 (FBW7alpha) in the nucleoplasm and counteracting ubiquitination of MYC by the SCF(FBXW7) complex. Deubiquitinates ZNF304, hence preventing ZNF304 degradation by the proteasome and leading to the activated KRAS-mediated promoter hypermethylation and transcriptional silencing of tumor suppressor genes (TSGs) in a subset of colorectal cancers (CRC) cells. In Mus musculus (Mouse), this protein is Ubiquitin carboxyl-terminal hydrolase 28 (Usp28).